The primary structure comprises 738 residues: Alanine--tRNA ligase (738 aa).

4 residues coordinate Zn(2+): histidine 564, histidine 568, cysteine 666, and histidine 670.

The protein belongs to the class-II aminoacyl-tRNA synthetase family. Homotetramer. Zn(2+) serves as cofactor.

The protein resides in the cytoplasm. It catalyses the reaction tRNA(Ala) + L-alanine + ATP = L-alanyl-tRNA(Ala) + AMP + diphosphate. Functionally, catalyzes the attachment of alanine to tRNA(Ala) in a two-step reaction: alanine is first activated by ATP to form Ala-AMP and then transferred to the acceptor end of tRNA(Ala). Also edits incorrectly charged Ser-tRNA(Ala) and Gly-tRNA(Ala) via its editing domain. The polypeptide is Alanine--tRNA ligase (alaS) (Yersinia pestis bv. Antiqua (strain Antiqua)).